Consider the following 619-residue polypeptide: Enolase 4 (619 aa).

The segment covering 173–184 has biased composition (basic and acidic residues); it reads DKERKELEKSQE. Residues 173–236 form a disordered region; the sequence is DKERKELEKS…PPEPPEPVLH (64 aa). Residues 188 to 206 show a composition bias toward pro residues; that stretch reads PAPPPVTLPPPPPPPPPPP. Residue Glu-302 participates in substrate binding. Residues 333 to 354 are disordered; it reads TLPPPKQETKKGHNGSKRAQPP. Lys-497 acts as the Proton acceptor in catalysis. Lys-548 is a binding site for substrate.

The protein belongs to the enolase family. In terms of assembly, interacts with ENO1. Isoform 1 and isoform 4 interact with AKAP4. Synthesized as an approximately 70-kDa precursor, which then undergoes proteolytic cleavage to an approximately 60-kDa enzyme; HOATZ associates directly or indirectly with ENO4 to mediate this process before its transport to mature flagella. In terms of tissue distribution, testis-specific. Expressed in spermatids and ependyma (at protein level). As to expression, expressed at higher levels in late spermatids than in pachytene spermatocytes. Expressed at higher levels in pachytene spermatocytes than in late spermatids.

It carries out the reaction (2R)-2-phosphoglycerate = phosphoenolpyruvate + H2O. Its pathway is carbohydrate degradation; glycolysis; pyruvate from D-glyceraldehyde 3-phosphate: step 4/5. In terms of biological role, required for sperm motility, function and male fertility. May be involved in the normal assembly of the sperm fibrous sheath and provides most of the enolase activity in sperm. The polypeptide is Enolase 4 (Eno4) (Mus musculus (Mouse)).